Here is a 448-residue protein sequence, read N- to C-terminus: Cysteine--tRNA ligase (448 aa).

Cys27 provides a ligand contact to Zn(2+). Residues 29 to 39 carry the 'HIGH' region motif; it reads PTVYNYIHVGN. Zn(2+) contacts are provided by Cys210, His235, and Glu239. Positions 267-271 match the 'KMSKS' region motif; sequence KMSKS. Lys270 provides a ligand contact to ATP.

Belongs to the class-I aminoacyl-tRNA synthetase family. Monomer. Zn(2+) is required as a cofactor.

It localises to the cytoplasm. The catalysed reaction is tRNA(Cys) + L-cysteine + ATP = L-cysteinyl-tRNA(Cys) + AMP + diphosphate. In Lactococcus lactis subsp. cremoris (strain MG1363), this protein is Cysteine--tRNA ligase.